The primary structure comprises 252 residues: MTRTILSSSSSLSPQQAGSPVIVALDYADARQALAFADRVAPSQCRLKIGKEMFTQAGPALVRDLQQRGFEVFLDLKFHDIPNTVAKAVSAAAELGVWMVNVHASGGERMMAAAREALVPFGADAPVLIAVTVLTSMNDEDLRGIGIAGSASDHAVRLAILAQACGLDGVVCSAWEAARLKTDCGAGFALVTPGIRPTGSDAGDQRRVMTPLQAQQVGVDYMVIGRPITQAADPAATLAAILQELQPGGADV.

Substrate is bound by residues D26, K48, 75–84 (DLKFHDIPNT), T135, R196, Q205, G225, and R226. The active-site Proton donor is the K77.

This sequence belongs to the OMP decarboxylase family. Type 1 subfamily. As to quaternary structure, homodimer.

The enzyme catalyses orotidine 5'-phosphate + H(+) = UMP + CO2. It participates in pyrimidine metabolism; UMP biosynthesis via de novo pathway; UMP from orotate: step 2/2. Catalyzes the decarboxylation of orotidine 5'-monophosphate (OMP) to uridine 5'-monophosphate (UMP). The polypeptide is Orotidine 5'-phosphate decarboxylase (Sodalis glossinidius (strain morsitans)).